Consider the following 116-residue polypeptide: Holo-[acyl-carrier-protein] synthase (116 aa).

Aspartate 5 and glutamate 50 together coordinate Mg(2+).

Belongs to the P-Pant transferase superfamily. AcpS family. Mg(2+) is required as a cofactor.

It localises to the cytoplasm. It catalyses the reaction apo-[ACP] + CoA = holo-[ACP] + adenosine 3',5'-bisphosphate + H(+). Transfers the 4'-phosphopantetheine moiety from coenzyme A to a Ser of acyl-carrier-protein. The chain is Holo-[acyl-carrier-protein] synthase from Campylobacter lari (strain RM2100 / D67 / ATCC BAA-1060).